A 364-amino-acid chain; its full sequence is Dihydroorotate dehydrogenase (quinone) (364 aa).

Residues 62-66 (AGFDK) and Thr86 contribute to the FMN site. Lys66 is a substrate binding site. 111–115 (NRMGF) lines the substrate pocket. 2 residues coordinate FMN: Asn142 and Asn175. Residue Asn175 coordinates substrate. The Nucleophile role is filled by Ser178. Asn180 is a substrate binding site. FMN-binding residues include Lys216 and Thr244. 245-246 (NT) serves as a coordination point for substrate. FMN contacts are provided by residues Gly267, Gly296, and 317-318 (YT).

Belongs to the dihydroorotate dehydrogenase family. Type 2 subfamily. Monomer. FMN serves as cofactor.

It localises to the cell membrane. It carries out the reaction (S)-dihydroorotate + a quinone = orotate + a quinol. It participates in pyrimidine metabolism; UMP biosynthesis via de novo pathway; orotate from (S)-dihydroorotate (quinone route): step 1/1. Functionally, catalyzes the conversion of dihydroorotate to orotate with quinone as electron acceptor. The sequence is that of Dihydroorotate dehydrogenase (quinone) from Anaeromyxobacter sp. (strain K).